The chain runs to 315 residues: Porphobilinogen deaminase (315 aa).

Residue cysteine 245 is modified to S-(dipyrrolylmethanemethyl)cysteine.

The protein belongs to the HMBS family. Monomer. Requires dipyrromethane as cofactor.

The enzyme catalyses 4 porphobilinogen + H2O = hydroxymethylbilane + 4 NH4(+). It participates in porphyrin-containing compound metabolism; protoporphyrin-IX biosynthesis; coproporphyrinogen-III from 5-aminolevulinate: step 2/4. The protein operates within porphyrin-containing compound metabolism; chlorophyll biosynthesis. In terms of biological role, tetrapolymerization of the monopyrrole PBG into the hydroxymethylbilane pre-uroporphyrinogen in several discrete steps. The chain is Porphobilinogen deaminase from Prochlorococcus marinus (strain NATL2A).